Consider the following 73-residue polypeptide: Neuropeptide-like protein 29 (73 aa).

A signal peptide spans 1-22; the sequence is MISTSSILVLVVLLACFMAASA. Y29, Y39, Y47, Y55, and Y63 each carry tyrosine amide. W71 carries the tryptophan amide modification.

The protein belongs to the YARP (YGGW-amide related peptide) family. Weakly or not expressed in absence of infection. Upon infection by D.coniospora, it is expressed in hypoderm. Also expressed in perivulval cells when D.coniospora spores adhere to this region. Expressed in hypodermis upon physical injury.

The protein resides in the secreted. Functionally, antimicrobial peptides that have antibacterial activity against the Gram-negative bacteria S.marcescens. Has antifungal activity against D.coniospora. May play a role in response to physical injury and osmotic stress. Through the neuropeptide receptor nlp-29, induces sleep upon activation of the innate immune response to molting and injury to the adult epidermis. This Caenorhabditis elegans protein is Neuropeptide-like protein 29.